A 289-amino-acid polypeptide reads, in one-letter code: 26S proteasome non-ATPase regulatory subunit 8 (289 aa).

S45 carries the post-translational modification Phosphoserine. Residues 101 to 270 (PSFERYMAQL…QQKPEDTTIP (170 aa)) form the PCI domain. K236 participates in a covalent cross-link: Glycyl lysine isopeptide (Lys-Gly) (interchain with G-Cter in SUMO2).

It belongs to the proteasome subunit S14 family. In terms of assembly, component of the 19S proteasome regulatory particle complex. The 26S proteasome consists of a 20S core particle (CP) and two 19S regulatory subunits (RP). The regulatory particle is made of a lid composed of 9 subunits including PSMD8, a base containing 6 ATPases and few additional components. Interacts with DDI2. Interacts with TASOR.

Functionally, component of the 26S proteasome, a multiprotein complex involved in the ATP-dependent degradation of ubiquitinated proteins. This complex plays a key role in the maintenance of protein homeostasis by removing misfolded or damaged proteins, which could impair cellular functions, and by removing proteins whose functions are no longer required. Therefore, the proteasome participates in numerous cellular processes, including cell cycle progression, apoptosis, or DNA damage repair. This is 26S proteasome non-ATPase regulatory subunit 8 (PSMD8) from Pongo abelii (Sumatran orangutan).